The following is a 395-amino-acid chain: Na(+)/H(+) antiporter NhaA (395 aa).

The next 11 helical transmembrane spans lie at 15–35, 66–86, 101–121, 132–152, 161–181, 184–204, 219–239, 265–285, 301–321, 339–359, and 366–386; these read FLGS…AGFV, IDAW…ILEI, VALP…TYLL, GWAI…LALG, AWLM…IAVF, NALY…LIGA, CILL…AGVI, ALTP…NVGV, LGIM…ATLL, VFGL…IANL, and LVIP…LAGW.

This sequence belongs to the NhaA Na(+)/H(+) (TC 2.A.33) antiporter family.

Its subcellular location is the cell inner membrane. The catalysed reaction is Na(+)(in) + 2 H(+)(out) = Na(+)(out) + 2 H(+)(in). Na(+)/H(+) antiporter that extrudes sodium in exchange for external protons. In Gluconacetobacter diazotrophicus (strain ATCC 49037 / DSM 5601 / CCUG 37298 / CIP 103539 / LMG 7603 / PAl5), this protein is Na(+)/H(+) antiporter NhaA.